Here is a 172-residue protein sequence, read N- to C-terminus: Putative phosphoesterase BCG9842_B4061 (172 aa).

The Proton donor role is filled by histidine 34. 2 short sequence motifs (HXTX) span residues 34-37 (HITL) and 115-118 (HLTI). Histidine 115 functions as the Proton acceptor in the catalytic mechanism.

This sequence belongs to the 2H phosphoesterase superfamily. YjcG family.

In Bacillus cereus (strain G9842), this protein is Putative phosphoesterase BCG9842_B4061.